A 208-amino-acid chain; its full sequence is Uracil phosphoribosyltransferase (208 aa).

5-phospho-alpha-D-ribose 1-diphosphate contacts are provided by residues R78, R103, and 130–138 (DPMLATGVS). Residues I193 and 198–200 (GDA) each bind uracil. D199 contributes to the 5-phospho-alpha-D-ribose 1-diphosphate binding site.

It belongs to the UPRTase family. Mg(2+) is required as a cofactor.

The catalysed reaction is UMP + diphosphate = 5-phospho-alpha-D-ribose 1-diphosphate + uracil. Its pathway is pyrimidine metabolism; UMP biosynthesis via salvage pathway; UMP from uracil: step 1/1. Its activity is regulated as follows. Allosterically activated by GTP. Catalyzes the conversion of uracil and 5-phospho-alpha-D-ribose 1-diphosphate (PRPP) to UMP and diphosphate. In Thermosipho africanus (strain TCF52B), this protein is Uracil phosphoribosyltransferase.